Reading from the N-terminus, the 177-residue chain is Small ribosomal subunit protein bS16 (177 aa).

The tract at residues 80 to 177 (GIIAMPANGS…AAEAPKEEAK (98 aa)) is disordered. The segment covering 107 to 122 (AAPAAAPKAEAAPAAE) has biased composition (low complexity).

It belongs to the bacterial ribosomal protein bS16 family.

The sequence is that of Small ribosomal subunit protein bS16 from Pelagibacter ubique (strain HTCC1062).